The sequence spans 246 residues: UDP-N-acetyl-D-mannosaminuronic acid transferase (246 aa).

This sequence belongs to the glycosyltransferase 26 family.

The catalysed reaction is UDP-N-acetyl-alpha-D-mannosaminouronate + N-acetyl-alpha-D-glucosaminyl-di-trans,octa-cis-undecaprenyl diphosphate = beta-D-ManNAcA-(1-&gt;4)-alpha-D-GlcNAc-di-trans,octa-cis-undecaprenyl diphosphate + UDP + H(+). It participates in bacterial outer membrane biogenesis; enterobacterial common antigen biosynthesis. Its function is as follows. Catalyzes the synthesis of Und-PP-GlcNAc-ManNAcA (Lipid II), the second lipid-linked intermediate involved in enterobacterial common antigen (ECA) synthesis. This is UDP-N-acetyl-D-mannosaminuronic acid transferase from Yersinia pseudotuberculosis serotype IB (strain PB1/+).